Here is a 652-residue protein sequence, read N- to C-terminus: Probable L-type lectin-domain containing receptor kinase S.5 (652 aa).

The signal sequence occupies residues 1-20; it reads MRFSLAWKLLFLILTCKIET. The Extracellular portion of the chain corresponds to 21-266; that stretch reads QVKCLKFDFP…EGLKIDGDGN (246 aa). Residues 24–257 are legume-lectin like; that stretch reads CLKFDFPGFN…LNCVRSWSFE (234 aa). N-linked (GlcNAc...) asparagine glycosylation is found at N33, N91, N97, N100, N122, N139, N201, and N244. The helical transmembrane segment at 267-287 threads the bilayer; that stretch reads MLWLWITIPIVFIVGIGAFLG. Residues 288–652 lie on the Cytoplasmic side of the membrane; the sequence is ALYLRSRSKA…INSLTELTGR (365 aa). Residues 330–622 enclose the Protein kinase domain; it reads FGAENKLGQG…PDVPTERPAF (293 aa). ATP is bound by residues 336–344 and K357; that span reads LGQGGFGMV. D455 acts as the Proton acceptor in catalysis.

The protein in the C-terminal section; belongs to the protein kinase superfamily. Ser/Thr protein kinase family. This sequence in the N-terminal section; belongs to the leguminous lectin family.

It localises to the cell membrane. It catalyses the reaction L-seryl-[protein] + ATP = O-phospho-L-seryl-[protein] + ADP + H(+). It carries out the reaction L-threonyl-[protein] + ATP = O-phospho-L-threonyl-[protein] + ADP + H(+). The protein is Probable L-type lectin-domain containing receptor kinase S.5 (LECRKS5) of Arabidopsis thaliana (Mouse-ear cress).